The chain runs to 197 residues: Glycerol-3-phosphate acyltransferase (197 aa).

5 helical membrane passes run 5 to 25 (IYIA…GLIL), 54 to 74 (GLAA…VIIA), 80 to 100 (AEAA…PVWL), 112 to 132 (IGVL…LWLA), and 153 to 173 (IFLW…LTLL).

The protein belongs to the PlsY family. In terms of assembly, probably interacts with PlsX.

The protein resides in the cell inner membrane. It catalyses the reaction an acyl phosphate + sn-glycerol 3-phosphate = a 1-acyl-sn-glycero-3-phosphate + phosphate. It functions in the pathway lipid metabolism; phospholipid metabolism. Catalyzes the transfer of an acyl group from acyl-phosphate (acyl-PO(4)) to glycerol-3-phosphate (G3P) to form lysophosphatidic acid (LPA). This enzyme utilizes acyl-phosphate as fatty acyl donor, but not acyl-CoA or acyl-ACP. The sequence is that of Glycerol-3-phosphate acyltransferase from Rhodopseudomonas palustris (strain HaA2).